A 211-amino-acid polypeptide reads, in one-letter code: Protein G12 (211 aa).

Residues 1-19 (MKIAAFVVACLVATSAVSC) form the signal peptide.

The chain is Protein G12 from Anopheles gambiae (African malaria mosquito).